A 548-amino-acid chain; its full sequence is Chaperonin GroEL (548 aa).

ATP is bound by residues 29–32, Lys-50, 86–90, Gly-414, 478–480, and Asp-494; these read TMGP, DGTTT, and NAA.

This sequence belongs to the chaperonin (HSP60) family. In terms of assembly, forms a cylinder of 14 subunits composed of two heptameric rings stacked back-to-back. Interacts with the co-chaperonin GroES.

It is found in the cytoplasm. The catalysed reaction is ATP + H2O + a folded polypeptide = ADP + phosphate + an unfolded polypeptide.. Functionally, together with its co-chaperonin GroES, plays an essential role in assisting protein folding. The GroEL-GroES system forms a nano-cage that allows encapsulation of the non-native substrate proteins and provides a physical environment optimized to promote and accelerate protein folding. In terms of biological role, may play a protective role against the defense mechanisms generated by the infected macrophages. This is Chaperonin GroEL from Legionella pneumophila subsp. pneumophila (strain Philadelphia 1 / ATCC 33152 / DSM 7513).